We begin with the raw amino-acid sequence, 155 residues long: Small ribosomal subunit protein uS7 (155 aa).

It belongs to the universal ribosomal protein uS7 family. Part of the 30S ribosomal subunit. Contacts proteins S9 and S11.

One of the primary rRNA binding proteins, it binds directly to 16S rRNA where it nucleates assembly of the head domain of the 30S subunit. Is located at the subunit interface close to the decoding center, probably blocks exit of the E-site tRNA. The protein is Small ribosomal subunit protein uS7 of Chlorobium phaeovibrioides (strain DSM 265 / 1930) (Prosthecochloris vibrioformis (strain DSM 265)).